The chain runs to 139 residues: D-ribose pyranase (139 aa).

His-20 acts as the Proton donor in catalysis. Substrate is bound by residues Asp-28, His-106, and 128 to 130 (YAN).

This sequence belongs to the RbsD / FucU family. RbsD subfamily. In terms of assembly, homodecamer.

Its subcellular location is the cytoplasm. The enzyme catalyses beta-D-ribopyranose = beta-D-ribofuranose. Its pathway is carbohydrate metabolism; D-ribose degradation; D-ribose 5-phosphate from beta-D-ribopyranose: step 1/2. Functionally, catalyzes the interconversion of beta-pyran and beta-furan forms of D-ribose. In Serratia proteamaculans (strain 568), this protein is D-ribose pyranase.